Here is a 167-residue protein sequence, read N- to C-terminus: Probable phospholipid hydroperoxide glutathione peroxidase (167 aa).

C41 is a catalytic residue.

The protein belongs to the glutathione peroxidase family.

It localises to the cytoplasm. It catalyses the reaction a hydroperoxy polyunsaturated fatty acid + 2 glutathione = a hydroxy polyunsaturated fatty acid + glutathione disulfide + H2O. In terms of biological role, protects cells and enzymes from oxidative damage, by catalyzing the reduction of hydrogen peroxide, lipid peroxides and organic hydroperoxide, by glutathione. The protein is Probable phospholipid hydroperoxide glutathione peroxidase (CSA) of Citrus sinensis (Sweet orange).